Reading from the N-terminus, the 3029-residue chain is Polycystin-1-related protein (3029 aa).

A signal peptide spans 1-21; the sequence is MAKHLYLAFSLILVPFLVSKA. The Extracellular portion of the chain corresponds to 22-1685; that stretch reads KQTSNGEVPW…RDTDKLKNSP (1664 aa). The WSC domain occupies 29–121; that stretch reads VPWLVGCYRY…KNVASVYSTA (93 aa). PKD domains are found at residues 364-450 and 546-634; these read EGHC…IKGV and DHLF…PECY. In terms of domain architecture, REJ spans 633-1476; that stretch reads CYTRGVAIVG…NPYFSDMNHT (844 aa). 3 disordered regions span residues 754 to 773, 909 to 931, and 989 to 1051; these read RKGP…HPDE, CPSD…SNSP, and TSAI…PNKP. The span at 918–931 shows a compositional bias: polar residues; it reads VTPSTTPMTDSNSP. Over residues 997 to 1013 the composition is skewed to acidic residues; sequence SGDVDDDEVNNDNDDDS. Over residues 1020-1047 the composition is skewed to polar residues; it reads TLPTPLSMTNANSVNKPIITTDTPSFNK. The GAIN-B domain occupies 1525–1671; the sequence is RNVHVINQTA…GFIQPPNSLH (147 aa). 2 disulfides stabilise this stretch: Cys1624-Cys1651 and Cys1639-Cys1653. The segment at 1624–1671 is GPS; the sequence is CFYWNKRGKHWASDGCRLEKSINHTLVCRCNHLTAFSGGFIQPPNSLH. Residues 1686 to 1706 form a helical membrane-spanning segment; the sequence is LTMVLVISILVMYFLLLGFCV. At 1707-1895 the chain is on the cytoplasmic side; sequence KADRHDKKKL…SYSRFTRAQR (189 aa). Residues 1733–1851 enclose the PLAT domain; the sequence is SRFQLSVQTG…GNGKVECELF (119 aa). The helical transmembrane segment at 1896 to 1916 threads the bilayer; sequence LSCCLSLLLSFLCVNIAWYRP. Residues 1917-1933 lie on the Extracellular side of the membrane; that stretch reads KIEVTEVLGVLDVSANS. The helical transmembrane segment at 1934–1954 threads the bilayer; sequence IMIGVLGSLMVLPVNFLWIFF. Topologically, residues 1955–2101 are cytoplasmic; that stretch reads FRYSRRSLSR…YRSKFSLPHG (147 aa). A helical transmembrane segment spans residues 2102–2122; that stretch reads FVYVAWFGCLITGTVTSAITI. Residues 2123-2140 are Extracellular-facing; it reads WYGLSFGWDLSVHWFQSL. A helical transmembrane segment spans residues 2141–2161; sequence VFSLLESLLLSQPIMVLAFIF. Residues 2162–2250 lie on the Cytoplasmic side of the membrane; the sequence is YMSHKTKSGK…SLKNRVLRNY (89 aa). A helical transmembrane segment spans residues 2251 to 2271; it reads VVELFVFIMFFVVTCALVFSV. Residues 2272-2462 are Extracellular-facing; it reads ADPDVYHLNQ…GYSYFIRFTK (191 aa). Residues 2463 to 2483 form a helical membrane-spanning segment; that stretch reads LLFVVFFLYLLQHEFFLALKM. Topologically, residues 2484 to 2496 are cytoplasmic; sequence TFSYFTNFWRVYQ. The helical transmembrane segment at 2497–2517 threads the bilayer; sequence LLTIAISSACIVSYIHWSLSL. Residues 2518-2538 are Extracellular-facing; the sequence is YALLREVETERQSRVFYLSRQ. Residues 2539 to 2559 traverse the membrane as a helical segment; sequence ISWSQGFLQASYSLLLFLLLI. At 2560–2586 the chain is on the cytoplasmic side; that stretch reads RCLHLLRPFRFVRHFGRILSTSISSLL. A helical membrane pass occupies residues 2587-2607; it reads ACWVFGFILVVAFAHPGYLLF. Residues 2608-2651 lie on the Extracellular side of the membrane; the sequence is GSVHSSFKSFGDAFLLVTSFFRLEGVARYQDFALEEQTLLLSTY. A helical membrane pass occupies residues 2652–2672; sequence FALFLIGFCVIVRGSTAAVVL. Residues 2673–3029 are Cytoplasmic-facing; sequence HGIRCLGKRR…PVGQRVVSAM (357 aa). The interval 2704–2726 is disordered; the sequence is KKPKKPRPNSVSDLEETDDEDDL. Residues 2716 to 2726 are compositionally biased toward acidic residues; that stretch reads DLEETDDEDDL.

The protein belongs to the polycystin family. Heterodimer of 2 chains generated by proteolytic processing; the large extracellular N-terminal fragment and the membrane-bound C-terminal fragment predominantly remain associated and non-covalently linked. Autoproteolytically processed at the GPS region of the GAIN-B domain; this cleavage modulates receptor activity. In terms of tissue distribution, component of the acid-insoluble and acid-soluble organic matrix of the aragonitic skeleton (at protein level).

It localises to the membrane. This chain is Polycystin-1-related protein, found in Acropora millepora (Staghorn coral).